Here is a 1358-residue protein sequence, read N- to C-terminus: Probable aldehyde oxidase 1 (1358 aa).

One can recognise a 2Fe-2S ferredoxin-type domain in the interval 4–91 (AAAVVAVNGE…HCAVTTSEGI (88 aa)). [2Fe-2S] cluster contacts are provided by C43, C48, C51, and C73. The FAD-binding PCMH-type domain occupies 236–418 (AVTGDGCWFH…ISISIPDWCS (183 aa)). Residues 540–567 (KPENANNVPNGSCTTNGTTNGSAESTVD) form a disordered region. The span at 549 to 561 (NGSCTTNGTTNGS) shows a compositional bias: low complexity.

It belongs to the xanthine dehydrogenase family. As to quaternary structure, aldehyde oxidases (AO) are homodimers and heterodimers of AO subunits. The cofactor is [2Fe-2S] cluster. It depends on FAD as a cofactor. Mo-molybdopterin serves as cofactor.

It carries out the reaction an aldehyde + O2 + H2O = a carboxylate + H2O2 + H(+). This is Probable aldehyde oxidase 1 from Oryza sativa subsp. japonica (Rice).